Consider the following 245-residue polypeptide: Isopentenyl phosphate kinase (245 aa).

5–9 (KIGGS) provides a ligand contact to ATP. Glycine 45 contacts substrate. Position 46 (glycine 46) interacts with ATP. 2 residues coordinate substrate: histidine 50 and glycine 143. Residues aspartate 164, 169 to 174 (YSKDPK), glycine 201, and lysine 205 each bind ATP.

The protein belongs to the isopentenyl phosphate kinase family. As to quaternary structure, homodimer.

The catalysed reaction is isopentenyl phosphate + ATP = isopentenyl diphosphate + ADP. Catalyzes the formation of isopentenyl diphosphate (IPP), the building block of all isoprenoids. Has lower activity with isopentenyl thiolophosphate (ISP). Has low activity with dimethylallyl phosphate (DMAP), 1-butyl phosphate (BP) and 3-buten-1-yl phosphate (BEP). Has no significant activity with geranyl phosphate (in vitro). The chain is Isopentenyl phosphate kinase from Thermoplasma acidophilum (strain ATCC 25905 / DSM 1728 / JCM 9062 / NBRC 15155 / AMRC-C165).